The following is a 148-amino-acid chain: Protein mago nashi homolog 2 (148 aa).

A2 is modified (N-acetylalanine).

Belongs to the mago nashi family. In terms of assembly, component of the pre-catalytic, catalytic and post-catalytic spliceosome complexes. Heterodimer with RBM8A. Core component of the mRNA splicing-dependent exon junction complex (EJC); the core complex contains CASC3, EIF4A3, MAGOH or MAGOHB, and RBM8A.

It is found in the nucleus. Functionally, required for pre-mRNA splicing as component of the spliceosome. Plays a redundant role with MAGOH in the exon junction complex and in the nonsense-mediated decay (NMD) pathway. The polypeptide is Protein mago nashi homolog 2 (MAGOHB) (Bos taurus (Bovine)).